Here is a 641-residue protein sequence, read N- to C-terminus: MAKIIGIDLGTTNSCVAILEGGKPRVIENSEGARTTPSIVAFTADNEVLVGQSAKRQAITNPKNTLFAIKRLIGRRYKDDVVQKDIKMVPYTIVEAENGDAWVEVGGKKMAPPEISARVLMKLKKDAEAYLGEEVKEAVITVPAYFNDSQRQATKDAGRIAGLDVKRIINEPTAAALAYGMDKSRGDQKIAVYDLGGGTFDISIIEIAEVDGEHQFEVLSTNGDTFLGGEDFDLRIIEYIVDEFRKEQGIDLHNDPLALQRLKESAEKAKIELSSSQQTEINLPYITADATGPKHLNVKLTRAKLEALVEDLILRTRGPCETALKDAGLKSADIDEVILVGGQTRMPKVQEFVKEIFGREPRKDVNPDEAVAVGAAIQAGVLGGQVKDVLLLDVTPLSLGIETLGGVMTKLIEKNTTIPTKATQVFSTAEDNQTAVTIHVLQGEREMARDNKSLGRFDLSDIPMAPRGVPQIEVTFDIDANGILNVSAKDKATGKQQSIVIRASSGLSEDEIKRMVKDAELHAEEDRRMHELVSARNHADAVVHATNKTLAELGDKVSGEERAKIEAALNDLKDAMGGDNKDLIEQRTSALTELSGKLAERLYTQQGGTAGSETHSHEKAGGSGGDDVVDAEFEEVRDDKR.

Phosphothreonine; by autocatalysis is present on threonine 199. Residues 603 to 613 (YTQQGGTAGSE) show a composition bias toward polar residues. Residues 603-641 (YTQQGGTAGSETHSHEKAGGSGGDDVVDAEFEEVRDDKR) are disordered. A compositionally biased stretch (acidic residues) spans 627–641 (DVVDAEFEEVRDDKR).

The protein belongs to the heat shock protein 70 family.

Its function is as follows. Acts as a chaperone. The chain is Chaperone protein DnaK from Methylococcus capsulatus (strain ATCC 33009 / NCIMB 11132 / Bath).